We begin with the raw amino-acid sequence, 95 residues long: Putative membrane protein insertion efficiency factor (95 aa).

The tract at residues 72 to 95 (FDPVPDAPTSPSPSSSCSCKGPHP) is disordered. The span at 83–95 (SPSSSCSCKGPHP) shows a compositional bias: low complexity.

This sequence belongs to the UPF0161 family.

It is found in the cell inner membrane. Could be involved in insertion of integral membrane proteins into the membrane. This Xanthomonas axonopodis pv. citri (strain 306) protein is Putative membrane protein insertion efficiency factor.